Here is a 474-residue protein sequence, read N- to C-terminus: Glutamate--tRNA ligase (474 aa).

The 'HIGH' region signature appears at 11-21 (PSPTGFLHIGG). Positions 240–244 (KLSKR) match the 'KMSKS' region motif. Lys243 serves as a coordination point for ATP.

This sequence belongs to the class-I aminoacyl-tRNA synthetase family. Glutamate--tRNA ligase type 1 subfamily. In terms of assembly, monomer.

The protein localises to the cytoplasm. The enzyme catalyses tRNA(Glu) + L-glutamate + ATP = L-glutamyl-tRNA(Glu) + AMP + diphosphate. Functionally, catalyzes the attachment of glutamate to tRNA(Glu) in a two-step reaction: glutamate is first activated by ATP to form Glu-AMP and then transferred to the acceptor end of tRNA(Glu). The protein is Glutamate--tRNA ligase of Bradyrhizobium sp. (strain BTAi1 / ATCC BAA-1182).